The chain runs to 221 residues: MGNEVPRASSFQMLMLLLLLLLLRAERLRGAELTFELPDNAKQCFHEEVEQGVKFSLDYQVITGGHYDVDCYVEDPMGNIIYRETKKQYDSFTYKTEVKGVYRFCFSNEFSTFSHKTVYFDFQVGDEPPILPDMGNRVTALTQMESACVTIHEALKTVIDSQTHYRLREAQDRARAEDLNSRVSYWSVGETIALFVVSFSQVLLLKSFFTEKRPINRAVHS.

Positions 1 to 30 (MGNEVPRASSFQMLMLLLLLLLLRAERLRG) are cleaved as a signal peptide. At 31 to 184 (AELTFELPDN…RAEDLNSRVS (154 aa)) the chain is on the lumenal side. Residues 42–124 (KQCFHEEVEQ…HKTVYFDFQV (83 aa)) enclose the GOLD domain. Arginine 103 carries the post-translational modification Dimethylated arginine. A helical membrane pass occupies residues 185 to 205 (YWSVGETIALFVVSFSQVLLL). Topologically, residues 206–221 (KSFFTEKRPINRAVHS) are cytoplasmic. The short motif at 208–209 (FF) is the COPII vesicle coat-binding element. The short motif at 208–221 (FFTEKRPINRAVHS) is the COPI vesicle coat-binding element.

Belongs to the EMP24/GP25L family. In terms of assembly, monomer in endoplasmic reticulum, endoplasmic reticulum-Golgi intermediate compartment and cis-Golgi network. Interacts (via C-terminus) with COPG1; the interaction involves dimeric TMED3; however, there are conflicting reports on the interaction. Interacts with GORASP1 and GORASP2.

It is found in the endoplasmic reticulum-Golgi intermediate compartment membrane. It localises to the golgi apparatus. The protein resides in the cis-Golgi network membrane. The protein localises to the golgi stack membrane. Its subcellular location is the endoplasmic reticulum membrane. It is found in the cytoplasmic vesicle. It localises to the COPI-coated vesicle membrane. In terms of biological role, potential role in vesicular protein trafficking, mainly in the early secretory pathway. Contributes to the coupled localization of TMED2 and TMED10 in the cis-Golgi network. The protein is Transmembrane emp24 domain-containing protein 3 (Tmed3) of Rattus norvegicus (Rat).